The sequence spans 57 residues: MLSWAVTFLVVALIAAVLGFGGIAGTAIEIAKIIFFVAIVLFVISAVAGLMRRGRAS.

Helical transmembrane passes span 4-24 and 30-50; these read WAVT…GGIA and IAKI…VAGL.

The protein belongs to the UPF0391 family.

It localises to the cell membrane. This is UPF0391 membrane protein Xaut_1725 from Xanthobacter autotrophicus (strain ATCC BAA-1158 / Py2).